We begin with the raw amino-acid sequence, 141 residues long: Nucleoside diphosphate kinase (141 aa).

Positions 9, 57, 85, 91, 102, and 112 each coordinate ATP. The Pros-phosphohistidine intermediate role is filled by H115.

It belongs to the NDK family. Homotetramer. It depends on Mg(2+) as a cofactor.

It localises to the cytoplasm. It carries out the reaction a 2'-deoxyribonucleoside 5'-diphosphate + ATP = a 2'-deoxyribonucleoside 5'-triphosphate + ADP. It catalyses the reaction a ribonucleoside 5'-diphosphate + ATP = a ribonucleoside 5'-triphosphate + ADP. Functionally, major role in the synthesis of nucleoside triphosphates other than ATP. The ATP gamma phosphate is transferred to the NDP beta phosphate via a ping-pong mechanism, using a phosphorylated active-site intermediate. This chain is Nucleoside diphosphate kinase, found in Chlamydia muridarum (strain MoPn / Nigg).